Consider the following 427-residue polypeptide: MNSLRLEPISRVAGEVNLPGSKSVSNRALLLAALARGTTRLTNLLDSDDIRHMLAALTQLGVKYKLSADKTECTVHGLGRSFAVSAPVNLFLGNAGTAMRPLCAALCLGSGEYMLGGEPRMEERPIGHLVDALREAGAHIQYLKKDGYPPLVVDAKGLWGGDVHVDGSVSSQFLTAFLMAAPMAAGDTRIHIKGELVSKPYIDITLHIMKQFGVVIEHDNYKLFYIKGNQSYVSPGDFLVEGDASSASYFLAAGAIKGKVRVTGIGKHSIQGDIHFADVLERMGARITWGDDFIEAEQGPLHGVDMDMNHIPDAAMTIAVAALFAEGPTSIRNIYNWRVKETDRLHAMATELRKLGVEVEEGHDFITVTPPTQLKHAEIDTYNDHRIAMCFSLVALSDIAVTINDPGCTSKTFPDYFDKLASVSQAV.

3 residues coordinate 3-phosphoshikimate: lysine 22, serine 23, and arginine 27. A phosphoenolpyruvate-binding site is contributed by lysine 22. Glycine 96 and arginine 124 together coordinate phosphoenolpyruvate. Residues serine 170, serine 171, glutamine 172, serine 198, aspartate 313, asparagine 336, and lysine 340 each coordinate 3-phosphoshikimate. Residue glutamine 172 participates in phosphoenolpyruvate binding. The active-site Proton acceptor is the aspartate 313. Residues arginine 344, arginine 386, and lysine 411 each contribute to the phosphoenolpyruvate site.

It belongs to the EPSP synthase family. Monomer.

Its subcellular location is the cytoplasm. It catalyses the reaction 3-phosphoshikimate + phosphoenolpyruvate = 5-O-(1-carboxyvinyl)-3-phosphoshikimate + phosphate. Its pathway is metabolic intermediate biosynthesis; chorismate biosynthesis; chorismate from D-erythrose 4-phosphate and phosphoenolpyruvate: step 6/7. In terms of biological role, catalyzes the transfer of the enolpyruvyl moiety of phosphoenolpyruvate (PEP) to the 5-hydroxyl of shikimate-3-phosphate (S3P) to produce enolpyruvyl shikimate-3-phosphate and inorganic phosphate. This Aeromonas salmonicida (strain A449) protein is 3-phosphoshikimate 1-carboxyvinyltransferase.